The chain runs to 288 residues: Protein PGR (288 aa).

The next 7 membrane-spanning stretches (helical) occupy residues 1–21 (METS…LIAF), 29–49 (LDLS…TAGF), 91–111 (VLCN…LTGW), 123–143 (IVTA…GDTW), 177–197 (LLAA…FGLF), 210–230 (LLVI…DSIL), and 268–288 (VNFV…VYIF).

Belongs to the TMEM19 family. In terms of tissue distribution, expressed in the vasculature of leaves, roots, inflorescences, siliques, anther filaments and sepals. Detected primarily in the phloem tissues, including in the root ans shoot apical meristems.

The protein resides in the cell membrane. In terms of biological role, involved in the glucose-triggered developmental leaf growth process. This is Protein PGR from Arabidopsis thaliana (Mouse-ear cress).